The chain runs to 347 residues: MSKQAIRLTQYSHGAGCGCKISPKVLETILHSEQAKFVDPNLLVGNETRDDAAVYDLGNGTSIISTTDFFMPIVDNPFDFGRIAATNAISDIFAMGGKPIMAIAILGWPINTLSPDIAREVTEGGRFACRQAGIALAGGHSIDAPEPIFGLAVTGVVPTERVKKNSTAQAGCKLFLTKPLGIGVLTTAEKKSLLKPEHQGLATEVMCRMNVAGAAFANIDGVKAMTDVTGFGLLGHLSEMCQGAGVQAMLCYQDIPKLPGVEEYIALGAVPGGTERNFASYGHLMGDMSREVRSLLCDPQTSGGLLLAVTPDAEDDVKATAAEFGIELTAIGELVEARGGRAMVEIR.

Residue cysteine 17 is part of the active site. Residues lysine 20 and 48–50 (TRD) each bind ATP. Residue aspartate 51 coordinates Mg(2+). ATP is bound by residues aspartate 68, aspartate 91, and 139-141 (GHS). Aspartate 91 contacts Mg(2+). Position 227 (aspartate 227) interacts with Mg(2+).

The protein belongs to the selenophosphate synthase 1 family. Class I subfamily. As to quaternary structure, homodimer. The cofactor is Mg(2+).

The catalysed reaction is hydrogenselenide + ATP + H2O = selenophosphate + AMP + phosphate + 2 H(+). Functionally, synthesizes selenophosphate from selenide and ATP. This chain is Selenide, water dikinase, found in Salmonella typhi.